The primary structure comprises 446 residues: tRNA modification GTPase MnmE (446 aa).

Positions 24, 81, and 120 each coordinate (6S)-5-formyl-5,6,7,8-tetrahydrofolate. The TrmE-type G domain occupies 216–368 (GLHAVLIGPP…LHTRLRELAL (153 aa)). Asn-226 contributes to the K(+) binding site. Residues 226-231 (NAGKSS), 245-251 (TDVAGTT), and 270-273 (DTAG) contribute to the GTP site. Ser-230 serves as a coordination point for Mg(2+). K(+) is bound by residues Thr-245, Val-247, and Thr-250. Thr-251 lines the Mg(2+) pocket. A (6S)-5-formyl-5,6,7,8-tetrahydrofolate-binding site is contributed by Lys-446.

This sequence belongs to the TRAFAC class TrmE-Era-EngA-EngB-Septin-like GTPase superfamily. TrmE GTPase family. As to quaternary structure, homodimer. Heterotetramer of two MnmE and two MnmG subunits. It depends on K(+) as a cofactor.

The protein resides in the cytoplasm. Functionally, exhibits a very high intrinsic GTPase hydrolysis rate. Involved in the addition of a carboxymethylaminomethyl (cmnm) group at the wobble position (U34) of certain tRNAs, forming tRNA-cmnm(5)s(2)U34. This Xanthomonas campestris pv. campestris (strain B100) protein is tRNA modification GTPase MnmE.